We begin with the raw amino-acid sequence, 312 residues long: Ribonuclease Z (312 aa).

Residues histidine 62, histidine 64, aspartate 66, histidine 67, histidine 144, aspartate 215, and histidine 273 each contribute to the Zn(2+) site. Aspartate 66 functions as the Proton acceptor in the catalytic mechanism.

The protein belongs to the RNase Z family. Homodimer. Zn(2+) is required as a cofactor.

The enzyme catalyses Endonucleolytic cleavage of RNA, removing extra 3' nucleotides from tRNA precursor, generating 3' termini of tRNAs. A 3'-hydroxy group is left at the tRNA terminus and a 5'-phosphoryl group is left at the trailer molecule.. Zinc phosphodiesterase, which displays some tRNA 3'-processing endonuclease activity. Probably involved in tRNA maturation, by removing a 3'-trailer from precursor tRNA. The protein is Ribonuclease Z of Prochlorococcus marinus subsp. pastoris (strain CCMP1986 / NIES-2087 / MED4).